A 142-amino-acid polypeptide reads, in one-letter code: Large ribosomal subunit protein uL11 (142 aa).

It belongs to the universal ribosomal protein uL11 family. As to quaternary structure, part of the ribosomal stalk of the 50S ribosomal subunit. Interacts with L10 and the large rRNA to form the base of the stalk. L10 forms an elongated spine to which L12 dimers bind in a sequential fashion forming a multimeric L10(L12)X complex. Post-translationally, one or more lysine residues are methylated.

Its function is as follows. Forms part of the ribosomal stalk which helps the ribosome interact with GTP-bound translation factors. The polypeptide is Large ribosomal subunit protein uL11 (Sinorhizobium medicae (strain WSM419) (Ensifer medicae)).